We begin with the raw amino-acid sequence, 771 residues long: Hyperosmolality-gated Ca2+ permeable channel 1.2 (771 aa).

Residues 1 to 4 (MATL) are Extracellular-facing. Residues 5–27 (QDIGVSAGINILSAFVFFIIFAV) form a helical membrane-spanning segment. The Cytoplasmic segment spans residues 28–100 (LRLQPFNDRV…AGLDSVVYLR (73 aa)). Residues 101-125 (IYWLGLKIFTPIAVLAWAVLVPVNW) form a helical membrane-spanning segment. Topologically, residues 126-156 (TNNTLEMAKQLRNVTSSDIDKLSVSNIPEYS) are extracellular. A helical transmembrane segment spans residues 157-178 (MRFWTHIVMAYAFTIWTCYVLM). The Cytoplasmic portion of the chain corresponds to 179-374 (KEYETIANMR…AIPYVSLTVR (196 aa)). The chain crosses the membrane as a helical span at residues 375-401 (RLIMHVAFFFLTFFFIVPIAFVQSLAT). The Extracellular portion of the chain corresponds to 402–419 (IEGIVKAAPFLKFIVDDK). The helical transmembrane segment at 420–445 (FMKSVIQGFLPGIALKLFLAFLPSIL) threads the bilayer. The Cytoplasmic portion of the chain corresponds to 446–462 (MIMSKFEGFTSISSLER). Residues 463–485 (RAAFRYYIFNLVNVFLASVIAGA) traverse the membrane as a helical segment. The Extracellular portion of the chain corresponds to 486–504 (AFEQLNSFLNQSANQIPKT). The helical transmembrane segment at 505–533 (IGVAIPMKATFFITYIMVDGWAGVAGEIL) threads the bilayer. At 534–566 (MLKPLIMFHLKNAFLVKTDKDREEAMDPGSIGF) the chain is on the cytoplasmic side. A helical membrane pass occupies residues 567-588 (NTGEPRIQLYFLLGLVYAPVTP). A topological domain (extracellular) is located at residue Met-589. Residues 590 to 605 (LLPFILVFFALAYIVY) form a helical membrane-spanning segment. Residues 606–625 (RHQIINVYNQEYESAAAFWP) lie on the Cytoplasmic side of the membrane. Residues 626 to 648 (DVHGRVIAALVISQLLLMGLLGT) traverse the membrane as a helical segment. Topologically, residues 649–651 (KHA) are extracellular. Residues 652-670 (ALAAPFLIALPVLTIGFHH) form a helical membrane-spanning segment. At 671 to 771 (FCKGRYEPAF…PSLPFSGKLV (101 aa)) the chain is on the cytoplasmic side. The interval 741 to 771 (PTKRQSRRNTPAPSIISGDDSPSLPFSGKLV) is disordered.

Belongs to the CSC1 (TC 1.A.17) family. Homodimer.

The protein localises to the membrane. Its activity is regulated as follows. Activated by hyperosmotic shock after mannitol or NaCl treatment. Activated by mechanical pressure: activated in response to membrane stretch and poke. Membrane lipids play a key role in mechanosensation by acting as a wall mainly formed by lipid head groups. Acts as an osmosensitive calcium-permeable cation channel. Specifically conducts cations including Ca(2+), K(+) and Na(+) in vitro. Inactivation or closure of the channel is calcium-dependent. Mechanosensitive ion channel that converts mechanical stimuli into a flow of ions: activated in response to membrane stretch and poke. This chain is Hyperosmolality-gated Ca2+ permeable channel 1.2, found in Arabidopsis thaliana (Mouse-ear cress).